The primary structure comprises 194 residues: Holliday junction branch migration complex subunit RuvA (194 aa).

The interval 1 to 64 (MISRLTGKLV…EDAHLLFGFA (64 aa)) is domain I. The interval 65 to 143 (TAEERKTFRQ…AHTVTDGLFA (79 aa)) is domain II. Residues 144 to 147 (AAPA) form a flexible linker region. Residues 147-194 (AADETEDIVSTLLALGYSEREAKAAVKGVPEGTDVGEGVRLALKNLLK) form a domain III region.

The protein belongs to the RuvA family. Homotetramer. Forms an RuvA(8)-RuvB(12)-Holliday junction (HJ) complex. HJ DNA is sandwiched between 2 RuvA tetramers; dsDNA enters through RuvA and exits via RuvB. An RuvB hexamer assembles on each DNA strand where it exits the tetramer. Each RuvB hexamer is contacted by two RuvA subunits (via domain III) on 2 adjacent RuvB subunits; this complex drives branch migration. In the full resolvosome a probable DNA-RuvA(4)-RuvB(12)-RuvC(2) complex forms which resolves the HJ.

The protein localises to the cytoplasm. The RuvA-RuvB-RuvC complex processes Holliday junction (HJ) DNA during genetic recombination and DNA repair, while the RuvA-RuvB complex plays an important role in the rescue of blocked DNA replication forks via replication fork reversal (RFR). RuvA specifically binds to HJ cruciform DNA, conferring on it an open structure. The RuvB hexamer acts as an ATP-dependent pump, pulling dsDNA into and through the RuvAB complex. HJ branch migration allows RuvC to scan DNA until it finds its consensus sequence, where it cleaves and resolves the cruciform DNA. This is Holliday junction branch migration complex subunit RuvA from Neisseria meningitidis serogroup B (strain ATCC BAA-335 / MC58).